The following is a 340-amino-acid chain: tRNA-dihydrouridine(20/20a) synthase (340 aa).

FMN is bound by residues 22–24 (PMM) and Q75. Residue C105 is the Proton donor of the active site. FMN contacts are provided by residues K144, H177, 217–219 (NGG), and 239–240 (GR).

This sequence belongs to the Dus family. DusA subfamily. The cofactor is FMN.

The enzyme catalyses 5,6-dihydrouridine(20) in tRNA + NADP(+) = uridine(20) in tRNA + NADPH + H(+). The catalysed reaction is 5,6-dihydrouridine(20) in tRNA + NAD(+) = uridine(20) in tRNA + NADH + H(+). It catalyses the reaction 5,6-dihydrouridine(20a) in tRNA + NADP(+) = uridine(20a) in tRNA + NADPH + H(+). It carries out the reaction 5,6-dihydrouridine(20a) in tRNA + NAD(+) = uridine(20a) in tRNA + NADH + H(+). In terms of biological role, catalyzes the synthesis of 5,6-dihydrouridine (D), a modified base found in the D-loop of most tRNAs, via the reduction of the C5-C6 double bond in target uridines. Specifically modifies U20 and U20a in tRNAs. This Xylella fastidiosa (strain 9a5c) protein is tRNA-dihydrouridine(20/20a) synthase.